A 620-amino-acid chain; its full sequence is Dopamine beta-hydroxylase (620 aa).

The Cytoplasmic segment spans residues 1 to 19; the sequence is MQPHLSHQPCWSLPSPSVR. Residues 20–40 form a helical; Signal-anchor for type II membrane protein membrane-spanning segment; that stretch reads EAASMYGTAVAIFLVILVAAL. The Intragranular segment spans residues 41–620; the sequence is QGSEPPESPF…FVVITHGGRH (580 aa). The 117-residue stretch at 60-176 folds into the DOMON domain; sequence GTLELSWNVS…DTVHLVYGIL (117 aa). N-linked (GlcNAc...) asparagine glycosylation is found at asparagine 67 and asparagine 187. Cystine bridges form between cysteine 157–cysteine 599, cysteine 235–cysteine 286, cysteine 272–cysteine 298, cysteine 393–cysteine 506, cysteine 397–cysteine 568, and cysteine 469–cysteine 491. Tyrosine 233 is a catalytic residue. Residues histidine 265 and histidine 266 each coordinate Cu(2+). Asparagine 274 carries an N-linked (GlcNAc...) asparagine glycan. Histidine 336 lines the Cu(2+) pocket. Phosphoserine; by CaMK is present on serine 349. Residue histidine 415 is part of the active site. Cu(2+) is bound by residues histidine 415 and histidine 417. Asparagine 475 is a glycosylation site (N-linked (GlcNAc...) asparagine). Methionine 490 contributes to the Cu(2+) binding site. N-linked (GlcNAc...) asparagine glycans are attached at residues asparagine 569 and asparagine 587.

This sequence belongs to the copper type II ascorbate-dependent monooxygenase family. As to quaternary structure, homotetramer; composed of two disulfide-linked dimers. The cofactor is Cu(2+). In terms of processing, proteolytic cleavage after the membrane-anchor leads to the release of the soluble form. Post-translationally, N-glycosylated. In terms of tissue distribution, chromaffin granules of the adrenal medulla and synaptic vesicles of the sympathetic nervous system.

It is found in the cytoplasmic vesicle. Its subcellular location is the secretory vesicle lumen. It localises to the secretory vesicle. The protein resides in the chromaffin granule lumen. The protein localises to the secreted. It is found in the secretory vesicle membrane. Its subcellular location is the chromaffin granule membrane. The enzyme catalyses dopamine + 2 L-ascorbate + O2 = (R)-noradrenaline + 2 monodehydro-L-ascorbate radical + H2O. The protein operates within catecholamine biosynthesis; (R)-noradrenaline biosynthesis; (R)-noradrenaline from dopamine: step 1/1. Its function is as follows. Catalyzes the hydroxylation of dopamine to noradrenaline (also known as norepinephrine), and is thus vital for regulation of these neurotransmitters. This is Dopamine beta-hydroxylase (Dbh) from Rattus norvegicus (Rat).